We begin with the raw amino-acid sequence, 363 residues long: 3-isopropylmalate dehydrogenase (363 aa).

Residue 78 to 91 (GPKWENLPPESQPE) coordinates NAD(+). Residues Arg99, Arg109, Arg138, and Asp227 each coordinate substrate. Asp227, Asp251, and Asp255 together coordinate Mg(2+). NAD(+) is bound at residue 285-297 (GSAPDIAGKNIAN).

Belongs to the isocitrate and isopropylmalate dehydrogenases family. LeuB type 1 subfamily. In terms of assembly, homodimer. Mg(2+) is required as a cofactor. It depends on Mn(2+) as a cofactor.

It localises to the cytoplasm. It carries out the reaction (2R,3S)-3-isopropylmalate + NAD(+) = 4-methyl-2-oxopentanoate + CO2 + NADH. Its pathway is amino-acid biosynthesis; L-leucine biosynthesis; L-leucine from 3-methyl-2-oxobutanoate: step 3/4. Functionally, catalyzes the oxidation of 3-carboxy-2-hydroxy-4-methylpentanoate (3-isopropylmalate) to 3-carboxy-4-methyl-2-oxopentanoate. The product decarboxylates to 4-methyl-2 oxopentanoate. This chain is 3-isopropylmalate dehydrogenase, found in Salmonella typhi.